The primary structure comprises 794 residues: Inactive zinc metalloprotease C354.09c (794 aa).

The tract at residues 1–56 is disordered; that stretch reads MTDEKHVYVPPPKDPPSYEEVALHSALNNSAPPNDGEQNETSMEEMEIIEPPSEDS. A helical transmembrane segment spans residues 91–111; that stretch reads IPFQFLYLAVIATVIILASYY.

It belongs to the peptidase M28 family. M28B subfamily.

It is found in the membrane. This chain is Inactive zinc metalloprotease C354.09c, found in Schizosaccharomyces pombe (strain 972 / ATCC 24843) (Fission yeast).